A 204-amino-acid chain; its full sequence is Translation initiation factor 2 subunit beta (204 aa).

The 59-residue stretch at 146–204 folds into the TRAM domain; sequence NLEEGQVLDVEIQSLSKRGDGVVKMGRYIMYVSNAKPGQSVKIKISRISGSIVFTERAE.

The protein belongs to the eIF-2-beta/eIF-5 family. As to quaternary structure, heterotrimer composed of an alpha, a beta and a gamma chain.

EIF-2 functions in the early steps of protein synthesis by forming a ternary complex with GTP and initiator tRNA. The sequence is that of Translation initiation factor 2 subunit beta from Methanoregula boonei (strain DSM 21154 / JCM 14090 / 6A8).